Here is a 478-residue protein sequence, read N- to C-terminus: Amino acid oxidase imqH (478 aa).

Residues 1-22 form the signal peptide; the sequence is MPAPKSIIIVGSGVFGLSTAHA. 8 residues coordinate FAD: Val14, Phe15, Asp38, Asn53, Ala57, Asn58, Arg63, and Ile64. N-linked (GlcNAc...) asparagine glycans are attached at residues Asn97 and Asn167. Val208 serves as a coordination point for FAD. Position 399 is an S-8alpha-FAD cysteine (Cys399). FAD is bound by residues Phe432 and Lys433.

The protein belongs to the MSOX/MTOX family. As to quaternary structure, dimer. FAD is required as a cofactor.

Its pathway is secondary metabolite biosynthesis. Functionally, nonribosomal peptide synthetase; part of the gene cluster that mediates the biosynthesis of imizoquins A to D, tripeptide-derived alkaloids that serve a protective role against oxidative stress that are essential for normal germination. ImqB is a canonical three-module NRPS that assembles the tripeptide backbone of the imizoquins via condensation of Trp, Tyr, and Leu-derived precursors. N-methylation by imqF and phenol oxidation by imqC, followed by cyclization via the FAD-dependent oxidase imqH carry out the three-step transformation of L-tyrosine into tetrahydroisoquinoline. Importantly, this sequence requires the presence of a free amine in the tyrosine moiety, indicating that isoquinoline formation occurs prior to peptide bond formation. The imidazolidin-4-one ring of imizoquins could form following additional oxidation of the methyl-derived bridgehead carbon by imqH. Lastly, O-methylation by imqG and leucine hydroxylation by imqE complete biosynthesis of the imizoquins. The chain is Amino acid oxidase imqH from Aspergillus flavus (strain ATCC 200026 / FGSC A1120 / IAM 13836 / NRRL 3357 / JCM 12722 / SRRC 167).